Reading from the N-terminus, the 700-residue chain is Interleukin-1 receptor accessory protein-like 1-B (700 aa).

An N-terminal signal peptide occupies residues Met-1–Ser-18. The Extracellular portion of the chain corresponds to Leu-19–Thr-357. The Ig-like C2-type 1 domain occupies Thr-32–Thr-134. Cys-53 and Cys-118 are disulfide-bonded. Asn-63, Asn-122, Asn-138, Asn-213, Asn-264, and Asn-331 each carry an N-linked (GlcNAc...) asparagine glycan. Ig-like C2-type domains lie at Cys-143–Thr-232 and Pro-242–Ser-350. Cysteines 164 and 216 form a disulfide. Residues Cys-267 and Cys-334 are joined by a disulfide bond. Residues Val-358–Tyr-378 traverse the membrane as a helical segment. Residues Lys-379 to Trp-700 are Cytoplasmic-facing. Residues Lys-403 to Met-559 enclose the TIR domain. Glu-491 is a catalytic residue. The tract at residues Pro-564 to Trp-700 is required for synaptic vesicle accumulation during synaptogenesis.

The protein belongs to the interleukin-1 receptor family.

The protein localises to the cell membrane. Its subcellular location is the cytoplasm. It carries out the reaction NAD(+) + H2O = ADP-D-ribose + nicotinamide + H(+). Its function is as follows. May regulate secretion and presynaptic differentiation through inhibition of the activity of N-type voltage-gated calcium channel. During presynaptic differentiation may regulate both synaptic vesicle accumulation in axon terminals and subsequent axon terminal remodeling. The protein is Interleukin-1 receptor accessory protein-like 1-B (il1rapl1b) of Danio rerio (Zebrafish).